The primary structure comprises 251 residues: Triosephosphate isomerase (251 aa).

Substrate is bound at residue 9-11 (NWK). Histidine 95 serves as the catalytic Electrophile. Catalysis depends on glutamate 167, which acts as the Proton acceptor. Substrate is bound by residues glycine 173, serine 213, and 234 to 235 (GG). Position 213 is a phosphoserine (serine 213).

It belongs to the triosephosphate isomerase family. Homodimer.

The protein localises to the cytoplasm. The catalysed reaction is D-glyceraldehyde 3-phosphate = dihydroxyacetone phosphate. It participates in carbohydrate biosynthesis; gluconeogenesis. The protein operates within carbohydrate degradation; glycolysis; D-glyceraldehyde 3-phosphate from glycerone phosphate: step 1/1. Involved in the gluconeogenesis. Catalyzes stereospecifically the conversion of dihydroxyacetone phosphate (DHAP) to D-glyceraldehyde-3-phosphate (G3P). In Bacillus anthracis, this protein is Triosephosphate isomerase.